A 377-amino-acid polypeptide reads, in one-letter code: Protein FAM199X-B (377 aa).

Residues 240-254 (KEHSPRQRCTRESWK) show a composition bias toward basic and acidic residues. Residues 240-350 (KEHSPRQRCT…EQRQARKERI (111 aa)) are disordered. Positions 256-301 (TSYSTASTSGVSGASVSSSSASMVSTASSTGSSGGNSASNSSANMS) are enriched in low complexity. Over residues 319–338 (DSKKRSKQRKLQQKALRKRQ) the composition is skewed to basic residues. Positions 321–349 (KKRSKQRKLQQKALRKRQLKEQRQARKER) form a coiled coil. The segment covering 339–350 (LKEQRQARKERI) has biased composition (basic and acidic residues).

Belongs to the FAM199 family.

The chain is Protein FAM199X-B (fam199x-b) from Xenopus laevis (African clawed frog).